Consider the following 217-residue polypeptide: Small ribosomal subunit protein uS3 (217 aa).

Residues 38–106 (VRKYIETALK…RVHINIIEIK (69 aa)) enclose the KH type-2 domain.

This sequence belongs to the universal ribosomal protein uS3 family. Part of the 30S ribosomal subunit. Forms a tight complex with proteins S10 and S14.

Functionally, binds the lower part of the 30S subunit head. Binds mRNA in the 70S ribosome, positioning it for translation. The chain is Small ribosomal subunit protein uS3 from Lysinibacillus sphaericus (strain C3-41).